A 122-amino-acid chain; its full sequence is Large ribosomal subunit protein uL18 (122 aa).

Residues 1 to 24 are disordered; sequence MSTLSRKQQTQKRHRRLRRHLSGT. The span at 9 to 21 shows a compositional bias: basic residues; sequence QTQKRHRRLRRHL.

Belongs to the universal ribosomal protein uL18 family. In terms of assembly, part of the 50S ribosomal subunit; part of the 5S rRNA/L5/L18/L25 subcomplex. Contacts the 5S and 23S rRNAs.

Functionally, this is one of the proteins that bind and probably mediate the attachment of the 5S RNA into the large ribosomal subunit, where it forms part of the central protuberance. The protein is Large ribosomal subunit protein uL18 of Synechococcus sp. (strain WH7803).